The sequence spans 130 residues: Small ribosomal subunit protein uS11c (130 aa).

It belongs to the universal ribosomal protein uS11 family. In terms of assembly, part of the 30S ribosomal subunit.

The protein resides in the plastid. Its subcellular location is the chloroplast. This is Small ribosomal subunit protein uS11c from Marchantia polymorpha (Common liverwort).